Consider the following 199-residue polypeptide: Thymidine kinase (199 aa).

ATP contacts are provided by residues G23–T30 and D95–Q98. Catalysis depends on E96, which acts as the Proton acceptor. Zn(2+) is bound by residues C152, C155, C184, and C187.

This sequence belongs to the thymidine kinase family. Homotetramer.

The protein localises to the cytoplasm. It carries out the reaction thymidine + ATP = dTMP + ADP + H(+). In Bacteroides fragilis (strain ATCC 25285 / DSM 2151 / CCUG 4856 / JCM 11019 / LMG 10263 / NCTC 9343 / Onslow / VPI 2553 / EN-2), this protein is Thymidine kinase.